The primary structure comprises 398 residues: Tryptophan synthase beta chain (398 aa).

K92 carries the post-translational modification N6-(pyridoxal phosphate)lysine.

Belongs to the TrpB family. In terms of assembly, tetramer of two alpha and two beta chains. Requires pyridoxal 5'-phosphate as cofactor.

It carries out the reaction (1S,2R)-1-C-(indol-3-yl)glycerol 3-phosphate + L-serine = D-glyceraldehyde 3-phosphate + L-tryptophan + H2O. It functions in the pathway amino-acid biosynthesis; L-tryptophan biosynthesis; L-tryptophan from chorismate: step 5/5. Functionally, the beta subunit is responsible for the synthesis of L-tryptophan from indole and L-serine. The chain is Tryptophan synthase beta chain from Nitrosospira multiformis (strain ATCC 25196 / NCIMB 11849 / C 71).